Here is a 398-residue protein sequence, read N- to C-terminus: Ribosomal RNA small subunit methyltransferase B (398 aa).

S-adenosyl-L-methionine-binding positions include 221–227 (CGGAGLK), aspartate 242, aspartate 268, and aspartate 283. Catalysis depends on cysteine 336, which acts as the Nucleophile.

The protein belongs to the class I-like SAM-binding methyltransferase superfamily. RsmB/NOP family.

The protein localises to the cytoplasm. The enzyme catalyses cytidine(967) in 16S rRNA + S-adenosyl-L-methionine = 5-methylcytidine(967) in 16S rRNA + S-adenosyl-L-homocysteine + H(+). Its function is as follows. Specifically methylates the cytosine at position 967 (m5C967) of 16S rRNA. This is Ribosomal RNA small subunit methyltransferase B from Thermus thermophilus (strain ATCC 27634 / DSM 579 / HB8).